Consider the following 216-residue polypeptide: Enolase-phosphatase E1 (216 aa).

2 residues coordinate Mg(2+): Asp-8 and Glu-10. Residues 115–116 and Lys-149 contribute to the substrate site; that span reads SS. Mg(2+) is bound at residue Asp-172.

This sequence belongs to the HAD-like hydrolase superfamily. MasA/MtnC family. As to quaternary structure, monomer. The cofactor is Mg(2+).

It is found in the cytoplasm. The protein resides in the nucleus. The enzyme catalyses 5-methylsulfanyl-2,3-dioxopentyl phosphate + H2O = 1,2-dihydroxy-5-(methylsulfanyl)pent-1-en-3-one + phosphate. The protein operates within amino-acid biosynthesis; L-methionine biosynthesis via salvage pathway; L-methionine from S-methyl-5-thio-alpha-D-ribose 1-phosphate: step 3/6. It functions in the pathway amino-acid biosynthesis; L-methionine biosynthesis via salvage pathway; L-methionine from S-methyl-5-thio-alpha-D-ribose 1-phosphate: step 4/6. Functionally, bifunctional enzyme that catalyzes the enolization of 2,3-diketo-5-methylthiopentyl-1-phosphate (DK-MTP-1-P) into the intermediate 2-hydroxy-3-keto-5-methylthiopentenyl-1-phosphate (HK-MTPenyl-1-P), which is then dephosphorylated to form the acireductone 1,2-dihydroxy-3-keto-5-methylthiopentene (DHK-MTPene). In Schizosaccharomyces pombe (strain 972 / ATCC 24843) (Fission yeast), this protein is Enolase-phosphatase E1 (utr4).